A 217-amino-acid polypeptide reads, in one-letter code: Flagellin B1 (217 aa).

Positions 1–12 are excised as a propeptide; it reads MKVFEFLKGKRG.

It belongs to the archaeal flagellin family.

It is found in the archaeal flagellum. Flagellin is the subunit protein which polymerizes to form the filaments of archaeal flagella. This is Flagellin B1 (flaB1) from Methanocaldococcus jannaschii (strain ATCC 43067 / DSM 2661 / JAL-1 / JCM 10045 / NBRC 100440) (Methanococcus jannaschii).